Here is a 490-residue protein sequence, read N- to C-terminus: Glutamate--tRNA ligase 1 (490 aa).

The 'HIGH' region signature appears at 27–37 (PSPTGYLHIGG). The 'KMSKS' region motif lies at 254-258 (KLSKR). Lysine 257 contacts ATP.

Belongs to the class-I aminoacyl-tRNA synthetase family. Glutamate--tRNA ligase type 1 subfamily. In terms of assembly, monomer.

The protein localises to the cytoplasm. The enzyme catalyses tRNA(Glu) + L-glutamate + ATP = L-glutamyl-tRNA(Glu) + AMP + diphosphate. Its function is as follows. Catalyzes the attachment of glutamate to tRNA(Glu) in a two-step reaction: glutamate is first activated by ATP to form Glu-AMP and then transferred to the acceptor end of tRNA(Glu). This chain is Glutamate--tRNA ligase 1, found in Sphingopyxis alaskensis (strain DSM 13593 / LMG 18877 / RB2256) (Sphingomonas alaskensis).